Reading from the N-terminus, the 248-residue chain is DNA repair protein RecO (248 aa).

It belongs to the RecO family.

Functionally, involved in DNA repair and RecF pathway recombination. The sequence is that of DNA repair protein RecO from Bartonella tribocorum (strain CIP 105476 / IBS 506).